Reading from the N-terminus, the 438-residue chain is Ribosomal protein uS12 methylthiotransferase RimO (438 aa).

In terms of domain architecture, MTTase N-terminal spans Met1–Asp116. Positions 10, 46, 79, 147, 151, and 154 each coordinate [4Fe-4S] cluster. A Radical SAM core domain is found at Thr133–Glu363. A TRAM domain is found at Glu366–Thr435.

The protein belongs to the methylthiotransferase family. RimO subfamily. Requires [4Fe-4S] cluster as cofactor.

It is found in the cytoplasm. It carries out the reaction L-aspartate(89)-[ribosomal protein uS12]-hydrogen + (sulfur carrier)-SH + AH2 + 2 S-adenosyl-L-methionine = 3-methylsulfanyl-L-aspartate(89)-[ribosomal protein uS12]-hydrogen + (sulfur carrier)-H + 5'-deoxyadenosine + L-methionine + A + S-adenosyl-L-homocysteine + 2 H(+). Functionally, catalyzes the methylthiolation of an aspartic acid residue of ribosomal protein uS12. In Alkaliphilus oremlandii (strain OhILAs) (Clostridium oremlandii (strain OhILAs)), this protein is Ribosomal protein uS12 methylthiotransferase RimO.